A 308-amino-acid chain; its full sequence is GTPase Era (308 aa).

Residues 14 to 181 (RCGFVALIGA…RSTLAEMVPP (168 aa)) form the Era-type G domain. The segment at 22-29 (GAPNVGKS) is G1. 22–29 (GAPNVGKS) provides a ligand contact to GTP. The G2 stretch occupies residues 48-52 (QTTRA). The tract at residues 69–72 (DTPG) is G3. Residues 69–73 (DTPGI) and 131–134 (NKVD) each bind GTP. A G4 region spans residues 131-134 (NKVD). The segment at 160–162 (IAA) is G5. A KH type-2 domain is found at 212-289 (LHQELPYQST…HLFLFVKVRE (78 aa)).

This sequence belongs to the TRAFAC class TrmE-Era-EngA-EngB-Septin-like GTPase superfamily. Era GTPase family. Monomer.

The protein localises to the cytoplasm. Its subcellular location is the cell inner membrane. In terms of biological role, an essential GTPase that binds both GDP and GTP, with rapid nucleotide exchange. Plays a role in 16S rRNA processing and 30S ribosomal subunit biogenesis and possibly also in cell cycle regulation and energy metabolism. This is GTPase Era from Bradyrhizobium diazoefficiens (strain JCM 10833 / BCRC 13528 / IAM 13628 / NBRC 14792 / USDA 110).